The sequence spans 297 residues: uncharacterized protein (297 aa).

The segment at 175-199 (VLPTNRNNPVRSNVDIKPVNPPSSK) is disordered. The segment covering 176–185 (LPTNRNNPVR) has biased composition (polar residues). Residue asparagine 269 is glycosylated (N-linked (GlcNAc...) asparagine; by host). A helical membrane pass occupies residues 277 to 297 (LFGSPVLLICVASLLLLIIIL).

It belongs to the ascovirus HvAV ORF18 family.

Its subcellular location is the membrane. This is an uncharacterized protein from Noctuidae (owlet moths).